The following is a 236-amino-acid chain: 28 kDa antigen (236 aa).

The signal sequence occupies residues 1–22 (MPNRRRCKLSTAISTVATLAIA). Residues 76–105 (PVPSLTGTDDPGNGLRTPGLTSPDLTNQEL) form a disordered region. The span at 94-105 (GLTSPDLTNQEL) shows a compositional bias: polar residues.

It to M.tuberculosis ERP.

This is 28 kDa antigen from Mycobacterium leprae (strain TN).